Consider the following 357-residue polypeptide: UDP-3-O-acylglucosamine N-acyltransferase (357 aa).

The active-site Proton acceptor is the His251.

Belongs to the transferase hexapeptide repeat family. LpxD subfamily. Homotrimer.

The enzyme catalyses a UDP-3-O-[(3R)-3-hydroxyacyl]-alpha-D-glucosamine + a (3R)-hydroxyacyl-[ACP] = a UDP-2-N,3-O-bis[(3R)-3-hydroxyacyl]-alpha-D-glucosamine + holo-[ACP] + H(+). It functions in the pathway bacterial outer membrane biogenesis; LPS lipid A biosynthesis. Catalyzes the N-acylation of UDP-3-O-acylglucosamine using 3-hydroxyacyl-ACP as the acyl donor. Is involved in the biosynthesis of lipid A, a phosphorylated glycolipid that anchors the lipopolysaccharide to the outer membrane of the cell. This Ralstonia pickettii (strain 12J) protein is UDP-3-O-acylglucosamine N-acyltransferase.